The following is a 350-amino-acid chain: Spermidine/putrescine import ATP-binding protein PotA (350 aa).

Residues 6–236 (LELRNVTKDY…PENLWVAKFI (231 aa)) enclose the ABC transporter domain. Residue 38–45 (GPSGCGKT) coordinates ATP.

It belongs to the ABC transporter superfamily. Spermidine/putrescine importer (TC 3.A.1.11.1) family. The complex is composed of two ATP-binding proteins (PotA), two transmembrane proteins (PotB and PotC) and a solute-binding protein (PotD).

Its subcellular location is the cell membrane. It catalyses the reaction ATP + H2O + polyamine-[polyamine-binding protein]Side 1 = ADP + phosphate + polyamineSide 2 + [polyamine-binding protein]Side 1.. Its function is as follows. Part of the ABC transporter complex PotABCD involved in spermidine/putrescine import. Responsible for energy coupling to the transport system. This Mesoplasma florum (strain ATCC 33453 / NBRC 100688 / NCTC 11704 / L1) (Acholeplasma florum) protein is Spermidine/putrescine import ATP-binding protein PotA.